A 541-amino-acid chain; its full sequence is Putative transferase YhbX (541 aa).

Topologically, residues 1–60 are periplasmic; the sequence is MTVFNKFARTFKSHWLLYLCVIVFGITNLVASSGAHMVQRLLFFVLTILVVKRISSLPLR. A helical transmembrane segment spans residues 61 to 81; it reads LLVAAPFVLLTAADMSISLYS. The Cytoplasmic segment spans residues 82–110; sequence WCTFGTTFNDGFAISVLQSDPDEVVKMLG. A helical membrane pass occupies residues 111-131; the sequence is MYIPYLCAFAFLSLLFLAVII. Over 132 to 141 the chain is Periplasmic; the sequence is KYDVSLPTKK. Residues 142-162 traverse the membrane as a helical segment; sequence VTGILLLIVISGSLFSACQFA. The Cytoplasmic segment spans residues 163–264; it reads YKDAKNKKAF…RKQIKLFNQA (102 aa). The helical transmembrane segment at 265-285 threads the bilayer; it reads ISGAPYTALSVPLSLTADSVL. The Periplasmic portion of the chain corresponds to 286–541; sequence SHDIHNYPDN…QGNPTPEGQG (256 aa).

The protein belongs to the phosphoethanolamine transferase family.

It localises to the cell inner membrane. In terms of biological role, probably does not transfer phosphoethanolamine to lipid A. This Escherichia coli (strain K12) protein is Putative transferase YhbX (yhbX).